The chain runs to 231 residues: Cytochrome c oxidase subunit 2 (231 aa).

At 1–14 the chain is on the mitochondrial intermembrane side; it reads MAHPAQLGLQNATS. A helical membrane pass occupies residues 15–45; that stretch reads PIMEELIAFHDHALMIIFLISSLVLYVISLM. The Mitochondrial matrix segment spans residues 46-59; sequence LTTKLTHTSTMNAQ. A helical membrane pass occupies residues 60–87; it reads EIEMIWTILPAIILIMIALPSLRILYMT. Over 88 to 231 the chain is Mitochondrial intermembrane; it reads DEFNKPYLTL…WASYLYIVSL (144 aa). The Cu cation site is built by histidine 161, cysteine 196, glutamate 198, cysteine 200, histidine 204, and methionine 207. Glutamate 198 provides a ligand contact to Mg(2+).

This sequence belongs to the cytochrome c oxidase subunit 2 family. Component of the cytochrome c oxidase (complex IV, CIV), a multisubunit enzyme composed of 14 subunits. The complex is composed of a catalytic core of 3 subunits MT-CO1, MT-CO2 and MT-CO3, encoded in the mitochondrial DNA, and 11 supernumerary subunits COX4I, COX5A, COX5B, COX6A, COX6B, COX6C, COX7A, COX7B, COX7C, COX8 and NDUFA4, which are encoded in the nuclear genome. The complex exists as a monomer or a dimer and forms supercomplexes (SCs) in the inner mitochondrial membrane with NADH-ubiquinone oxidoreductase (complex I, CI) and ubiquinol-cytochrome c oxidoreductase (cytochrome b-c1 complex, complex III, CIII), resulting in different assemblies (supercomplex SCI(1)III(2)IV(1) and megacomplex MCI(2)III(2)IV(2)). Found in a complex with TMEM177, COA6, COX18, COX20, SCO1 and SCO2. Interacts with TMEM177 in a COX20-dependent manner. Interacts with COX20. Interacts with COX16. It depends on Cu cation as a cofactor.

The protein resides in the mitochondrion inner membrane. The catalysed reaction is 4 Fe(II)-[cytochrome c] + O2 + 8 H(+)(in) = 4 Fe(III)-[cytochrome c] + 2 H2O + 4 H(+)(out). Its function is as follows. Component of the cytochrome c oxidase, the last enzyme in the mitochondrial electron transport chain which drives oxidative phosphorylation. The respiratory chain contains 3 multisubunit complexes succinate dehydrogenase (complex II, CII), ubiquinol-cytochrome c oxidoreductase (cytochrome b-c1 complex, complex III, CIII) and cytochrome c oxidase (complex IV, CIV), that cooperate to transfer electrons derived from NADH and succinate to molecular oxygen, creating an electrochemical gradient over the inner membrane that drives transmembrane transport and the ATP synthase. Cytochrome c oxidase is the component of the respiratory chain that catalyzes the reduction of oxygen to water. Electrons originating from reduced cytochrome c in the intermembrane space (IMS) are transferred via the dinuclear copper A center (CU(A)) of subunit 2 and heme A of subunit 1 to the active site in subunit 1, a binuclear center (BNC) formed by heme A3 and copper B (CU(B)). The BNC reduces molecular oxygen to 2 water molecules using 4 electrons from cytochrome c in the IMS and 4 protons from the mitochondrial matrix. In Alouatta palliata (Mantled howler monkey), this protein is Cytochrome c oxidase subunit 2 (MT-CO2).